The primary structure comprises 359 residues: UDP-3-O-acylglucosamine N-acyltransferase (359 aa).

Catalysis depends on histidine 253, which acts as the Proton acceptor.

This sequence belongs to the transferase hexapeptide repeat family. LpxD subfamily. As to quaternary structure, homotrimer.

The catalysed reaction is a UDP-3-O-[(3R)-3-hydroxyacyl]-alpha-D-glucosamine + a (3R)-hydroxyacyl-[ACP] = a UDP-2-N,3-O-bis[(3R)-3-hydroxyacyl]-alpha-D-glucosamine + holo-[ACP] + H(+). It participates in bacterial outer membrane biogenesis; LPS lipid A biosynthesis. Catalyzes the N-acylation of UDP-3-O-acylglucosamine using 3-hydroxyacyl-ACP as the acyl donor. Is involved in the biosynthesis of lipid A, a phosphorylated glycolipid that anchors the lipopolysaccharide to the outer membrane of the cell. In Burkholderia cenocepacia (strain ATCC BAA-245 / DSM 16553 / LMG 16656 / NCTC 13227 / J2315 / CF5610) (Burkholderia cepacia (strain J2315)), this protein is UDP-3-O-acylglucosamine N-acyltransferase.